We begin with the raw amino-acid sequence, 257 residues long: Imidazole glycerol phosphate synthase subunit HisF (257 aa).

Active-site residues include D11 and D130.

Belongs to the HisA/HisF family. Heterodimer of HisH and HisF.

It is found in the cytoplasm. It catalyses the reaction 5-[(5-phospho-1-deoxy-D-ribulos-1-ylimino)methylamino]-1-(5-phospho-beta-D-ribosyl)imidazole-4-carboxamide + L-glutamine = D-erythro-1-(imidazol-4-yl)glycerol 3-phosphate + 5-amino-1-(5-phospho-beta-D-ribosyl)imidazole-4-carboxamide + L-glutamate + H(+). The protein operates within amino-acid biosynthesis; L-histidine biosynthesis; L-histidine from 5-phospho-alpha-D-ribose 1-diphosphate: step 5/9. Functionally, IGPS catalyzes the conversion of PRFAR and glutamine to IGP, AICAR and glutamate. The HisF subunit catalyzes the cyclization activity that produces IGP and AICAR from PRFAR using the ammonia provided by the HisH subunit. In Pseudoalteromonas atlantica (strain T6c / ATCC BAA-1087), this protein is Imidazole glycerol phosphate synthase subunit HisF.